The primary structure comprises 103 residues: Small ribosomal subunit protein uS10 (103 aa).

It belongs to the universal ribosomal protein uS10 family. As to quaternary structure, part of the 30S ribosomal subunit.

Its function is as follows. Involved in the binding of tRNA to the ribosomes. This is Small ribosomal subunit protein uS10 from Korarchaeum cryptofilum (strain OPF8).